Here is a 394-residue protein sequence, read N- to C-terminus: tRNA-specific adenosine deaminase 1 (394 aa).

Positions 54–388 constitute an A to I editase domain; the sequence is SLGCGTKCIG…TKKPHELLDF (335 aa). A Zn(2+)-binding site is contributed by His78. Glu80 functions as the Proton donor in the catalytic mechanism. Arg84 and Arg85 together coordinate 1D-myo-inositol hexakisphosphate. Residues Cys127 and Cys191 each coordinate Zn(2+). 1D-myo-inositol hexakisphosphate contacts are provided by Lys194, Arg197, Lys320, Lys357, and Lys381.

It belongs to the ADAT1 family. It depends on 1D-myo-inositol hexakisphosphate as a cofactor. As to expression, widely expressed in early embryos, and later concentrates in the central nervous system.

The enzyme catalyses adenosine(37) in tRNA(Ala) + H2O + H(+) = inosine(37) in tRNA(Ala) + NH4(+). Functionally, specifically deaminates adenosine-37 to inosine in tRNA-Ala. The sequence is that of tRNA-specific adenosine deaminase 1 from Drosophila melanogaster (Fruit fly).